The sequence spans 32 residues: Trypsin inhibitor 3 (32 aa).

Disulfide bonds link C6-C23, C13-C25, and C19-C31.

It belongs to the protease inhibitor I7 (squash-type serine protease inhibitor) family.

It is found in the secreted. Functionally, inhibits trypsin. This is Trypsin inhibitor 3 from Cucurbita pepo (Vegetable marrow).